Reading from the N-terminus, the 158-residue chain is MSNNVIEKVTELVQPITDRHNFELVEVEFVKEGQGWFLRVYIDKVGGINIEECAMVSDELSEILDAQDPDPIPQAYFLEVSSPGAERPLKTKEDLTRSIGEYIHISLYASINKQKVFEGYLKSFENDEIVLDYLDKTRHKELKVTYDQVAFARLAIKI.

It belongs to the RimP family.

The protein resides in the cytoplasm. Its function is as follows. Required for maturation of 30S ribosomal subunits. In Pediococcus pentosaceus (strain ATCC 25745 / CCUG 21536 / LMG 10740 / 183-1w), this protein is Ribosome maturation factor RimP.